Consider the following 101-residue polypeptide: Small ribosomal subunit protein uS14 (101 aa).

The protein belongs to the universal ribosomal protein uS14 family. In terms of assembly, part of the 30S ribosomal subunit. Contacts proteins S3 and S10.

Binds 16S rRNA, required for the assembly of 30S particles and may also be responsible for determining the conformation of the 16S rRNA at the A site. This Pseudomonas aeruginosa (strain LESB58) protein is Small ribosomal subunit protein uS14.